Consider the following 178-residue polypeptide: N-alpha-acetyltransferase 20 (178 aa).

One can recognise an N-acetyltransferase domain in the interval Thr2–Ser157.

Belongs to the acetyltransferase family. ARD1 subfamily. In terms of assembly, component of the N-terminal acetyltransferase B (NatB) complex which is composed of NAA20 and NAA25.

Its subcellular location is the cytoplasm. It localises to the nucleus. It carries out the reaction N-terminal L-methionyl-L-asparaginyl-[protein] + acetyl-CoA = N-terminal N(alpha)-acetyl-L-methionyl-L-asparaginyl-[protein] + CoA + H(+). It catalyses the reaction N-terminal L-methionyl-L-glutaminyl-[protein] + acetyl-CoA = N-terminal N(alpha)-acetyl-L-methionyl-L-glutaminyl-[protein] + CoA + H(+). The enzyme catalyses N-terminal L-methionyl-L-aspartyl-[protein] + acetyl-CoA = N-terminal N(alpha)-acetyl-L-methionyl-L-aspartyl-[protein] + CoA + H(+). The catalysed reaction is N-terminal L-methionyl-L-glutamyl-[protein] + acetyl-CoA = N-terminal N(alpha)-acetyl-L-methionyl-L-glutamyl-[protein] + CoA + H(+). In terms of biological role, catalytic subunit of the NatB complex which catalyzes acetylation of the N-terminal methionine residues of peptides beginning with Met-Asp, Met-Glu, Met-Asn and Met-Gln. Proteins with cell cycle functions are overrepresented in the pool of NatB substrates. Required for maintaining the structure and function of actomyosin fibers and for proper cellular migration. This Homo sapiens (Human) protein is N-alpha-acetyltransferase 20 (NAA20).